Here is a 1787-residue protein sequence, read N- to C-terminus: Chitin synthase 5 (1787 aa).

Residues 1-26 form a disordered region; it reads MASRRMSMYSVTSEGMGGPRGAGQQS. N164 carries N-linked (GlcNAc...) asparagine glycosylation. Residues 345–367 are disordered; sequence RIRDGDESSDGGRGARTPNSAED. Residues N643, N657, N668, and N695 are each glycosylated (N-linked (GlcNAc...) asparagine). The next 2 membrane-spanning stretches (helical) occupy residues 747 to 767 and 783 to 803; these read MWVALVWAITFWIPSPLLRYV and FVLCFIIFLLNAAIVFWIIFL. 2 N-linked (GlcNAc...) asparagine glycosylation sites follow: N894 and N1018. A helical transmembrane segment spans residues 1055–1075; the sequence is FLLAFAIIMCAVILLKFVSAL. N1420 carries an N-linked (GlcNAc...) asparagine glycan. The next 3 membrane-spanning stretches (helical) occupy residues 1445–1465, 1478–1498, and 1506–1526; these read FVVFVDLFGTIILPATCVYLG, FPLITLIMLAAVYGLQALIFI, and IGWMIIYLLAFPIYSFILPIY. A glycan (N-linked (GlcNAc...) asparagine) is linked at N1533. A disordered region spans residues 1628 to 1657; that stretch reads SPNSPAPYQHMSRSPTAYAGPTPYSDNPAA. The region spanning 1729-1785 is the DEK-C domain; it reads GPDDFQIVDAIRAVLMEVDLDTVTKKQVRALVEQRLQTELVGERRTFLDRQIDNELA.

It belongs to the chitin synthase family. Class V subfamily.

It is found in the cell membrane. The catalysed reaction is [(1-&gt;4)-N-acetyl-beta-D-glucosaminyl](n) + UDP-N-acetyl-alpha-D-glucosamine = [(1-&gt;4)-N-acetyl-beta-D-glucosaminyl](n+1) + UDP + H(+). Polymerizes chitin, a structural polymer of the cell wall and septum, by transferring the sugar moiety of UDP-GlcNAc to the non-reducing end of the growing chitin polymer. May play a minor overlapping role with CHS6 in growth and differentiation. The sequence is that of Chitin synthase 5 from Pyricularia oryzae (strain 70-15 / ATCC MYA-4617 / FGSC 8958) (Rice blast fungus).